A 314-amino-acid chain; its full sequence is DNA-directed RNA polymerase subunit alpha (314 aa).

Residues 1-228 (MIEFEKPNIH…DHLSIFVNLT (228 aa)) form an alpha N-terminal domain (alpha-NTD) region. The segment at 245–314 (KEKMLEMTIE…DLGLSLRKED (70 aa)) is alpha C-terminal domain (alpha-CTD).

Belongs to the RNA polymerase alpha chain family. Homodimer. The RNAP catalytic core consists of 2 alpha, 1 beta, 1 beta' and 1 omega subunit. When a sigma factor is associated with the core the holoenzyme is formed, which can initiate transcription.

The enzyme catalyses RNA(n) + a ribonucleoside 5'-triphosphate = RNA(n+1) + diphosphate. DNA-dependent RNA polymerase catalyzes the transcription of DNA into RNA using the four ribonucleoside triphosphates as substrates. The polypeptide is DNA-directed RNA polymerase subunit alpha (Lactiplantibacillus plantarum (strain ATCC BAA-793 / NCIMB 8826 / WCFS1) (Lactobacillus plantarum)).